Reading from the N-terminus, the 162-residue chain is G/U mismatch-specific DNA glycosylase (162 aa).

It belongs to the uracil-DNA glycosylase (UDG) superfamily. TDG/mug family. Binds DNA as a monomer.

The protein localises to the cytoplasm. The catalysed reaction is Specifically hydrolyzes mismatched double-stranded DNA and polynucleotides, releasing free uracil.. In terms of biological role, excises ethenocytosine and uracil, which can arise by alkylation or deamination of cytosine, respectively, from the corresponding mispairs with guanine in ds-DNA. It is capable of hydrolyzing the carbon-nitrogen bond between the sugar-phosphate backbone of the DNA and the mispaired base. The complementary strand guanine functions in substrate recognition. Required for DNA damage lesion repair in stationary-phase cells. The polypeptide is G/U mismatch-specific DNA glycosylase (Serratia marcescens).